The sequence spans 163 residues: Zinc finger A20 and AN1 domain-containing stress-associated protein 3 (163 aa).

An A20-type zinc finger spans residues 7–41 (LQEPRLCANNCGFFGSTATQNLCSKCFRDLQHQEQ). 4 residues coordinate Zn(2+): Cys13, Cys17, Cys29, and Cys32. The tract at residues 57–101 (VGAAASSSVSPPPPPPADSKEIVEAKSEKRAAAEPEEADGPPQDP) is disordered. Residues 74-89 (DSKEIVEAKSEKRAAA) show a composition bias toward basic and acidic residues. Residues 98–144 (PQDPKRCLTCRRRVGITGFRCRCGFVFCGTHRYAEQHECSFDFKRMG) form an AN1-type zinc finger. Zn(2+)-binding residues include Cys104, Cys107, Cys118, Cys120, Cys125, His128, His134, and Cys136.

In terms of biological role, may be involved in environmental stress response. This is Zinc finger A20 and AN1 domain-containing stress-associated protein 3 (SAP3) from Arabidopsis thaliana (Mouse-ear cress).